A 133-amino-acid polypeptide reads, in one-letter code: Large-conductance mechanosensitive channel (133 aa).

2 helical membrane passes run 10–30 (FAVK…AAFG) and 76–96 (GIFV…FLVV).

It belongs to the MscL family. Homopentamer.

Its subcellular location is the cell inner membrane. Its function is as follows. Channel that opens in response to stretch forces in the membrane lipid bilayer. May participate in the regulation of osmotic pressure changes within the cell. The chain is Large-conductance mechanosensitive channel from Chlorobium phaeobacteroides (strain BS1).